Consider the following 82-residue polypeptide: U1-plectoxin-Pt1a (82 aa).

A signal peptide spans 1–20; that stretch reads MKHLIFSSALVCALVVCTFA. Positions 21–33 are excised as a propeptide; that stretch reads EEQVNVPFLPDER. Intrachain disulfides connect C37-C51, C44-C57, C50-C68, C54-C77, and C59-C66. The O-palmitoyl serine moiety is linked to residue S79. Positions 80 to 82 are excised as a propeptide; the sequence is RRR.

This sequence belongs to the neurotoxin 02 (plectoxin) family. 02 (plectoxin) subfamily. Post-translationally, plectoxin-5 presumably undergoes post-translational modification to give rise to plectoxin-6. As to expression, expressed by the venom gland.

Its subcellular location is the secreted. Potent toxin that may paralyze and/or kill insect pests such as H.virescens (lepidoptera), S.exigua (beet armyworm) and M.sexta (tobacco hornworm). The chain is U1-plectoxin-Pt1a from Plectreurys tristis (Spider).